The chain runs to 113 residues: Large ribosomal subunit protein bL19 (113 aa).

This sequence belongs to the bacterial ribosomal protein bL19 family.

Functionally, this protein is located at the 30S-50S ribosomal subunit interface and may play a role in the structure and function of the aminoacyl-tRNA binding site. This Corynebacterium urealyticum (strain ATCC 43042 / DSM 7109) protein is Large ribosomal subunit protein bL19.